Reading from the N-terminus, the 224-residue chain is Putative O-methyltransferase MUL_4520 (224 aa).

The span at 1–11 (MHGTDSSSDTP) shows a compositional bias: polar residues. The disordered stretch occupies residues 1-20 (MHGTDSSSDTPGQPAPSRAE). Residues Val51, Glu73, 75-76 (GT), Ser81, Asp99, and Ile100 contribute to the S-adenosyl-L-methionine site. Residue Asp147 coordinates substrate. An S-adenosyl-L-methionine-binding site is contributed by Asp149.

This sequence belongs to the class I-like SAM-binding methyltransferase superfamily. Cation-dependent O-methyltransferase family.

This is Putative O-methyltransferase MUL_4520 from Mycobacterium ulcerans (strain Agy99).